We begin with the raw amino-acid sequence, 103 residues long: Large ribosomal subunit protein uL24 (103 aa).

The protein belongs to the universal ribosomal protein uL24 family. In terms of assembly, part of the 50S ribosomal subunit.

Functionally, one of two assembly initiator proteins, it binds directly to the 5'-end of the 23S rRNA, where it nucleates assembly of the 50S subunit. In terms of biological role, one of the proteins that surrounds the polypeptide exit tunnel on the outside of the subunit. The polypeptide is Large ribosomal subunit protein uL24 (Sinorhizobium medicae (strain WSM419) (Ensifer medicae)).